A 274-amino-acid polypeptide reads, in one-letter code: MSASGEISTPRDYIGHHLNHLQLDLRTFELVNPHSTGPATFWTLNIDSLFFSVVLGLAFLLVFRKVAASATSGVPGKLQTAVELIIGFVDNSVRDMYHGKSKVIAPLALTVFVWVLLMNMMDLLPIDLLPYIGEHVFGLPALRVVPTADVSITLSMALGVFILIIFYSIKMKGVGGFTKELTMQPFYHPIFIPVNLILEGVSLLSKPLSLGLRLFGNMYAGELIFILIAGLLPWWSQWMLSVPWAIFHILIITLQAFIFMVLTIVYLSMASEEH.

Transmembrane regions (helical) follow at residues 43–63, 103–123, 149–169, 223–243, and 245–265; these read TLNI…LLVF, VIAP…MMDL, DVSI…FYSI, LIFI…LSVP, and AIFH…LTIV.

This sequence belongs to the ATPase A chain family. As to quaternary structure, F-type ATPases have 2 components, CF(1) - the catalytic core - and CF(0) - the membrane proton channel. CF(1) has five subunits: alpha(3), beta(3), gamma(1), delta(1), epsilon(1). CF(0) has three main subunits: a(1), b(2) and c(9-12). The alpha and beta chains form an alternating ring which encloses part of the gamma chain. CF(1) is attached to CF(0) by a central stalk formed by the gamma and epsilon chains, while a peripheral stalk is formed by the delta and b chains.

Its subcellular location is the cell inner membrane. Key component of the proton channel; it plays a direct role in the translocation of protons across the membrane. The polypeptide is ATP synthase subunit a (Yersinia pestis bv. Antiqua (strain Angola)).